A 374-amino-acid chain; its full sequence is MTMTAFLARRLIGNGSSQILGTSSSSSGPFISVSRAFFSSSTPIKATLFPGDGIGPEIAESVKQVFTAADVVIDWDEQFVGTEVDPRTNSFLTWDNLQSVLKNKVGLKGPMATPIGKGHRSLNLTLRKELNLYANVRPCYSLPGYKTRYDDVDLITIRENTEGEYSGLEHQVVKGVVESLKIITRKASMRVAEYAFLYAKTHGRKKVSAIHKANIMQKTDGLFLQCCDEVAAKYPEIYYEKVVIDNCCMMLVKNPALFDVLVMPNLYGDIISDLCAGLVGGLGLTPSMNIGEDGIALAEAVHGSAPDIAGMNLANPTALLLSGVMMLRHLKLNKQAEQIHSAIINTIAEGKYRTADLGGSSTTTDFTKAICDHL.

The transit peptide at 1–44 (MTMTAFLARRLIGNGSSQILGTSSSSSGPFISVSRAFFSSSTPI) directs the protein to the mitochondrion. Residues arginine 127, arginine 137, arginine 158, and aspartate 245 each coordinate substrate. Mg(2+)-binding residues include aspartate 245, aspartate 269, and aspartate 273.

It belongs to the isocitrate and isopropylmalate dehydrogenases family. Heterooligomer of catalytic and regulatory subunits. Mg(2+) serves as cofactor. It depends on Mn(2+) as a cofactor. In terms of tissue distribution, ubiquitous. Predominantly expressed in leaves.

Its subcellular location is the mitochondrion. It catalyses the reaction D-threo-isocitrate + NAD(+) = 2-oxoglutarate + CO2 + NADH. Its function is as follows. Catalytic subunit of the NAD(+)-dependent isocitrate dehydrogenase involved in the oxidative decarboxylation of isocitrate to 2-oxoglutarate. Performs an essential role in the oxidative function of the citric acid cycle. This is Isocitrate dehydrogenase [NAD] catalytic subunit 6, mitochondrial (IDH6) from Arabidopsis thaliana (Mouse-ear cress).